The sequence spans 320 residues: Methionyl-tRNA formyltransferase (320 aa).

Residue 114-117 participates in (6S)-5,6,7,8-tetrahydrofolate binding; sequence SLLP.

Belongs to the Fmt family.

The catalysed reaction is L-methionyl-tRNA(fMet) + (6R)-10-formyltetrahydrofolate = N-formyl-L-methionyl-tRNA(fMet) + (6S)-5,6,7,8-tetrahydrofolate + H(+). In terms of biological role, attaches a formyl group to the free amino group of methionyl-tRNA(fMet). The formyl group appears to play a dual role in the initiator identity of N-formylmethionyl-tRNA by promoting its recognition by IF2 and preventing the misappropriation of this tRNA by the elongation apparatus. In Acinetobacter baumannii (strain SDF), this protein is Methionyl-tRNA formyltransferase.